Consider the following 493-residue polypeptide: 3-octaprenyl-4-hydroxybenzoate carboxy-lyase (493 aa).

A Mn(2+)-binding site is contributed by asparagine 172. Prenylated FMN-binding positions include 175 to 177, 189 to 191, and 194 to 195; these read IYR, RWL, and RG. Glutamate 238 is a binding site for Mn(2+). The active-site Proton donor is the aspartate 287.

This sequence belongs to the UbiD family. Homohexamer. Prenylated FMN serves as cofactor. Requires Mn(2+) as cofactor.

Its subcellular location is the cell membrane. The catalysed reaction is a 4-hydroxy-3-(all-trans-polyprenyl)benzoate + H(+) = a 2-(all-trans-polyprenyl)phenol + CO2. It participates in cofactor biosynthesis; ubiquinone biosynthesis. In terms of biological role, catalyzes the decarboxylation of 3-octaprenyl-4-hydroxy benzoate to 2-octaprenylphenol, an intermediate step in ubiquinone biosynthesis. This Shewanella woodyi (strain ATCC 51908 / MS32) protein is 3-octaprenyl-4-hydroxybenzoate carboxy-lyase.